A 635-amino-acid chain; its full sequence is MTTAEAAAPESRTFEADVAKLLHLMVHSVYSDKDVFLRELISNAADACEKLRYEAITTPALLGEDARPRITLAIDAEGGRLTVEDNGIGMSRDEMVEALGTIARSGTKAFMERIEAAAGGEKAELIGQFGVGFYSAFMVAEKVDVISRRAGADTANIWSSDGKGAYTVGEIDVAQAPARGTRVVLHLNEDGKAYADRFRIERIVKEQSGHVPVPIYIVEKLDAEPEEIADGVALWTKSKSDISAEDYADFYRSVAGQFDQPALTVHFRAEGRHEYTALVFVPSTKPFDLFEPERTGRVKLYVKRVFITDDAELLPRYLRFVRGVVDSADLPLNLSREMLQDSAILAAIRKGVTGRVLTELEKLAQSDAEAYAGIWSNFGAVLKEGLYEDYERRAQLLNLARFKTTTSGTAADTGWRTLKDYVADLKENQTAIYYITGDLARVEHAPQLEGFRARGVEVLLLPDQVDSFWVTAGVDYEGKPFKSVTQGAADLSLIPLPKSDEAETPEPEAKDTGDFIAFVKETLGDQVADVRASDRLTTSAVCLVAPESGIDRRLEKLLASAGRLGDAAKPVLEINPRHPLVAALAAHGASDSNFRADAAHLLLDQARVLDGDQPSDPQAFAERLMRVMQRGLPTA.

An a; substrate-binding region spans residues 1 to 336 (MTTAEAAAPE…SADLPLNLSR (336 aa)). Residues 337–556 (EMLQDSAILA…ESGIDRRLEK (220 aa)) form a b region. The segment at 557 to 635 (LLASAGRLGD…RVMQRGLPTA (79 aa)) is c.

The protein belongs to the heat shock protein 90 family. As to quaternary structure, homodimer.

Its subcellular location is the cytoplasm. In terms of biological role, molecular chaperone. Has ATPase activity. The chain is Chaperone protein HtpG from Azorhizobium caulinodans (strain ATCC 43989 / DSM 5975 / JCM 20966 / LMG 6465 / NBRC 14845 / NCIMB 13405 / ORS 571).